A 75-amino-acid chain; its full sequence is MSAMVQIRNVPDELLHELKARAAAQRMSLSDFLLARLAEIAEEPALDDVLDRLAALPRRDLGASAAELVDEARSE.

Its function is as follows. Putative antitoxin component of a possible type II toxin-antitoxin (TA) system. The cognate toxin is VapC12. The protein is Putative antitoxin VapB12 (vapB12) of Mycobacterium tuberculosis (strain CDC 1551 / Oshkosh).